Here is an 884-residue protein sequence, read N- to C-terminus: MGGCVSVQVSCDQLLNHLGRCFCRKLYYIQNIKENLTSLEEAMEDLKALRDDLLRKVQTAEEGGLQRLHQIKVWLKRVKTIESQFNDLDSSRTVELQRLCCCGVGSRNLRLSYDYGRRVFLMLNIVEDLKSKGIFEEVAHPATRAVGEERPLQPTIVGQETILEKAWDHLMDDGTKIMGLYGMGGVGKTTLLTQINNRFCDTDDGVEIVIWVVVSGDLQIHKIQKEIGEKIGFIGVEWNQKSENQKAVDILNFLSKKRFVLLLDDIWKRVELTEIGIPNPTSENGCKIAFTTRCQSVCASMGVHDPMEVRCLGADDAWDLFKKKVGDITLSSHPDIPEIARKVAQACCGLPLALNVIGETMACKKTTQEWDRAVDVSTTYAANFGAVKERILPILKYSYDNLESESVKTCFLYCSLFPEDDLIEKERLIDYWICEGFIDGDENKKGAVGEGYEILGTLVCASLLVEGGKFNNKSYVKMHDVVREMALWIASDLRKHKDNCIVRAGFRLNEIPKVKDWKVVSRMSLVNNRIKEIHGSPECPKLTTLFLQDNRHLVNISGEFFRSMPRLVVLDLSWNVNLSGLPDQISELVSLRYLDLSYSSIGRLPVGLLKLKKLMHLNLESMLCLESVSGIDHLSNLKTVRLLNLRMWLTISLLEELERLENLEVLTIEIISSSALEQLLCSHRLVRCLQKVSVKYLDEESVRILTLPSIGDLREVFIGGCGMRDIIIERNTSLTSPCFPNLSKVLITGCNGLKDLTWLLFAPNLTHLNVWNSRQIEEIISQEKASTADIVPFRKLEYLHLWDLPELKSIYWNPLPFPCLNQINVQNKCRKLTKLPLDSQSCIVAGEELVIQYGDEEWKERVEWEDKATRLRFLPSCKLVLCNR.

A coiled-coil region spans residues 26-66 (LYYIQNIKENLTSLEEAMEDLKALRDDLLRKVQTAEEGGLQ). Positions 139–443 (AHPATRAVGE…CEGFIDGDEN (305 aa)) constitute an NB-ARC domain. 182–189 (GMGGVGKT) contacts ATP. 6 LRR repeats span residues 519–540 (VVSR…PECP), 541–563 (KLTT…FFRS), 566–588 (RLVV…ISEL), 590–612 (SLRY…LKLK), 613–635 (KLMH…DHLS), and 644–664 (NLRM…ENLE).

It belongs to the disease resistance NB-LRR family.

Probable disease resistance protein. This Arabidopsis thaliana (Mouse-ear cress) protein is Probable disease resistance protein At1g12290.